The sequence spans 184 residues: Protein PPLZ12 (184 aa).

In Lupinus polyphyllus (Large-leaved lupine), this protein is Protein PPLZ12 (PPLZ12).